The primary structure comprises 465 residues: Argininosuccinate lyase (465 aa).

The protein belongs to the lyase 1 family. Argininosuccinate lyase subfamily.

The protein localises to the cytoplasm. It carries out the reaction 2-(N(omega)-L-arginino)succinate = fumarate + L-arginine. It functions in the pathway amino-acid biosynthesis; L-arginine biosynthesis; L-arginine from L-ornithine and carbamoyl phosphate: step 3/3. The protein is Argininosuccinate lyase of Aromatoleum aromaticum (strain DSM 19018 / LMG 30748 / EbN1) (Azoarcus sp. (strain EbN1)).